The chain runs to 242 residues: Orotidine 5'-phosphate decarboxylase (242 aa).

Substrate contacts are provided by residues Asp16, Lys37, 64–73, Thr128, Arg190, Gln199, Gly219, and Arg220; that span reads DLKFHDIPNT. The active-site Proton donor is the Lys66.

This sequence belongs to the OMP decarboxylase family. Type 1 subfamily. In terms of assembly, homodimer.

The catalysed reaction is orotidine 5'-phosphate + H(+) = UMP + CO2. It functions in the pathway pyrimidine metabolism; UMP biosynthesis via de novo pathway; UMP from orotate: step 2/2. Functionally, catalyzes the decarboxylation of orotidine 5'-monophosphate (OMP) to uridine 5'-monophosphate (UMP). The protein is Orotidine 5'-phosphate decarboxylase of Prochlorococcus marinus (strain AS9601).